A 375-amino-acid polypeptide reads, in one-letter code: 2-heptyl-3-hydroxy-4(1H)-quinolone synthase (375 aa).

Belongs to the 3-hydroxybenzoate 6-hydroxylase family.

The enzyme catalyses 2-heptyl-4(1H)-quinolone + NADH + O2 + H(+) = 2-heptyl-3-hydroxy-4(1H)-quinolone + NAD(+) + H2O. Functionally, involved in the degradation pathway of the Pseudomonas aeruginosa quorum sensing signal molecule HHQ (2-heptyl-4(1H)-quinolone) to anthranilate. Catalyzes the hydroxylation of HHQ to PQS (2-heptyl-3-hydroxy-4(1H)-quinolone). This Mycobacteroides abscessus (strain ATCC 19977 / DSM 44196 / CCUG 20993 / CIP 104536 / JCM 13569 / NCTC 13031 / TMC 1543 / L948) (Mycobacterium abscessus) protein is 2-heptyl-3-hydroxy-4(1H)-quinolone synthase.